Here is a 507-residue protein sequence, read N- to C-terminus: TOM1-like protein 2 (507 aa).

Residues 20–152 (ATDGSLQSED…ELKRRGIEFP (133 aa)) form the VHS domain. Serine 160 carries the phosphoserine modification. Threonine 164 carries the post-translational modification Phosphothreonine. A disordered region spans residues 164-200 (TPQRSVPEMDPAATIPRSQTQPRTTAGTYSSPPPASY). Residues 219-307 (EQIARLRSEL…VFLRYERFER (89 aa)) form the GAT domain. The Clathrin-binding motif lies at 329–334 (NLIDLG). Residues 466 to 507 (ERAKAAETVPDLPSPPTEAPAPASNTSTRKKPERSDDALFAL) are disordered. The span at 498-507 (ERSDDALFAL) shows a compositional bias: basic and acidic residues.

The protein belongs to the TOM1 family. In terms of assembly, interacts with clathrin, SRC and TOLLIP. Interacts with MYO6. As to expression, ubiquitously expressed. Splicing pattern displays tissue specific variation.

In terms of biological role, acts as a MYO6/Myosin VI adapter protein that targets myosin VI to endocytic structures. May also play a role in recruiting clathrin to endosomes. May regulate growth factor-induced mitogenic signaling. The chain is TOM1-like protein 2 (Tom1l2) from Mus musculus (Mouse).